The chain runs to 70 residues: Chondroitin proteoglycan 9 (70 aa).

Positions 1-19 (MNFWHLLLLAVLFFVTVFG) are cleaved as a signal peptide. O-linked (Xyl...) (chondroitin sulfate) serine glycosylation is found at Ser25 and Ser27.

The polypeptide is Chondroitin proteoglycan 9 (cpg-9) (Caenorhabditis briggsae).